Reading from the N-terminus, the 335-residue chain is Methionine import ATP-binding protein MetN 1 (335 aa).

The 241-residue stretch at 2–242 (IEFQNVHKTY…PKHPTTRRFV (241 aa)) folds into the ABC transporter domain. Residue 38–45 (GHSGAGKS) participates in ATP binding.

Belongs to the ABC transporter superfamily. Methionine importer (TC 3.A.1.24) family. In terms of assembly, the complex is composed of two ATP-binding proteins (MetN), two transmembrane proteins (MetI) and a solute-binding protein (MetQ).

The protein localises to the cell inner membrane. It catalyses the reaction L-methionine(out) + ATP + H2O = L-methionine(in) + ADP + phosphate + H(+). It carries out the reaction D-methionine(out) + ATP + H2O = D-methionine(in) + ADP + phosphate + H(+). In terms of biological role, part of the ABC transporter complex MetNIQ involved in methionine import. Responsible for energy coupling to the transport system. The polypeptide is Methionine import ATP-binding protein MetN 1 (Pseudomonas fluorescens (strain ATCC BAA-477 / NRRL B-23932 / Pf-5)).